The primary structure comprises 467 residues: UDP-glycosyltransferase 71D2 (467 aa).

UDP-alpha-D-glucose contacts are provided by residues S283, 339-341 (SPQ), 356-364 (HCGWNSIVE), and 378-381 (YAEQ).

It belongs to the UDP-glycosyltransferase family.

The polypeptide is UDP-glycosyltransferase 71D2 (UGT71D2) (Arabidopsis thaliana (Mouse-ear cress)).